Reading from the N-terminus, the 100-residue chain is Urease subunit gamma (100 aa).

The protein belongs to the urease gamma subunit family. In terms of assembly, heterotrimer of UreA (gamma), UreB (beta) and UreC (alpha) subunits. Three heterotrimers associate to form the active enzyme.

It localises to the cytoplasm. The enzyme catalyses urea + 2 H2O + H(+) = hydrogencarbonate + 2 NH4(+). The protein operates within nitrogen metabolism; urea degradation; CO(2) and NH(3) from urea (urease route): step 1/1. The polypeptide is Urease subunit gamma (Citrobacter koseri (strain ATCC BAA-895 / CDC 4225-83 / SGSC4696)).